Consider the following 693-residue polypeptide: Sodium-dependent dopamine transporter (693 aa).

Residues 1–56 (MSEGRCSVAHMSSVVAPAKEANAMGPKAVELVLVKEQNGVQLTNSTLLNPPQSPTE) are Cytoplasmic-facing. A discontinuously helical membrane pass occupies residues 57–95 (AQDRETWSKKADFLLSVIGFAVDLANVWRFPYLCYKNGG). The Na(+) site is built by Gly-75, Ala-77, Val-78, Asp-79, and Asn-82. Asp-79 provides a ligand contact to dopamine. Helical transmembrane passes span 96–127 (GAFL…NREG) and 128–171 (AAGV…LSSF). 2 residues coordinate dopamine: Ser-149 and Gly-153. At 172–233 (TTELPWTHCN…SQGIDDLGPP (62 aa)) the chain is on the extracellular side. A disulfide bridge connects residues Cys-180 and Cys-189. Asn-181, Asn-196, and Asn-202 each carry an N-linked (GlcNAc...) asparagine glycan. The next 2 helical transmembrane spans lie at 234 to 253 (RWQL…FSLW) and 254 to 284 (KGVK…GITL). At 285-303 (PGAVDAIRAYLSVDFHRLC) the chain is on the extracellular side. The discontinuously helical transmembrane segment at 304–332 (EASVWIDAAIQICFSLGVGLGVLIAFSSY) threads the bilayer. Chloride is bound at residue Gln-314. Phe-317 is a binding site for dopamine. Na(+) contacts are provided by Ser-318 and Asn-350. Residue Ser-318 coordinates chloride. The chain crosses the membrane as a helical span at residues 333 to 373 (NKFTNNCYRDAIITTSVNSLTSFSSGFVVFSFLGYMAQKHS). Position 354 (Ser-354) interacts with chloride. Residues 374 to 397 (VPIGDVAKDGPGLIFIIYPEALAT) lie on the Extracellular side of the membrane. A run of 3 helical transmembrane segments spans residues 398-439 (LPLS…QLLH), 440-463 (RHRE…CVTN), and 464-496 (GGIY…AWFY). Na(+) contacts are provided by Leu-415, Asp-418, and Ser-419. 2 residues coordinate dopamine: Ser-419 and Ala-420. At 497–513 (GVWQFSDDIKQMTGRRP) the chain is on the cytoplasmic side. The chain crosses the membrane as a helical span at residues 514–539 (SLYWRLCWKFVSPCFLLFVVVVSIAT). Topologically, residues 540–550 (FRPPHYGAYVF) are extracellular. A helical membrane pass occupies residues 551 to 580 (PEWATALGWAIAASSMSVVPIYAAYKLCSL). An interaction with TGFB1I1 region spans residues 558 to 587 (GWAIAASSMSVVPIYAAYKLCSLPGSSREK). Over 581–693 (PGSSREKLAY…VESTGLCSVY (113 aa)) the chain is Cytoplasmic.

This sequence belongs to the sodium:neurotransmitter symporter (SNF) (TC 2.A.22) family. SLC6A3 subfamily. In terms of assembly, monomer. Homooligomer; disulfide-linked. Interacts with PRKCABP and TGFB1I1. Interacts (via N-terminus) with SYNGR3 (via N-terminus). Interacts with SLC18A2. Interacts with TOR1A (ATP-bound); TOR1A regulates SLC6A3 subcellular location. Interacts with alpha-synuclein/SNCA. Interacts with SEPTIN4. In terms of tissue distribution, expressed in the neurons of the substantia nigra of the brain.

It localises to the cell membrane. It is found in the cell projection. The protein localises to the neuron projection. The protein resides in the axon. The enzyme catalyses dopamine(out) + chloride(out) + Na(+)(out) = dopamine(in) + chloride(in) + Na(+)(in). It carries out the reaction (R)-noradrenaline(out) + chloride(out) + Na(+)(out) = (R)-noradrenaline(in) + chloride(in) + Na(+)(in). The catalysed reaction is dopamine(out) + chloride(out) + 2 Na(+)(out) = dopamine(in) + chloride(in) + 2 Na(+)(in). With respect to regulation, inhibited by GBR 12909 dihydrochloride, amphetamine and cocaine. Inhibited by zinc ions. Mediates sodium- and chloride-dependent transport of dopamine. Also mediates sodium- and chloride-dependent transport of norepinephrine (also known as noradrenaline). Regulator of light-dependent retinal hyaloid vessel regression, downstream of OPN5 signaling. This is Sodium-dependent dopamine transporter (SLC6A3) from Bos taurus (Bovine).